Reading from the N-terminus, the 217-residue chain is GTP cyclohydrolase 1 (217 aa).

Zn(2+)-binding residues include cysteine 108, histidine 111, and cysteine 179.

Belongs to the GTP cyclohydrolase I family. Toroid-shaped homodecamer, composed of two pentamers of five dimers.

The enzyme catalyses GTP + H2O = 7,8-dihydroneopterin 3'-triphosphate + formate + H(+). Its pathway is cofactor biosynthesis; 7,8-dihydroneopterin triphosphate biosynthesis; 7,8-dihydroneopterin triphosphate from GTP: step 1/1. This is GTP cyclohydrolase 1 from Shewanella denitrificans (strain OS217 / ATCC BAA-1090 / DSM 15013).